Reading from the N-terminus, the 341-residue chain is DNA fragmentation factor subunit beta (341 aa).

The CIDE-N domain maps to 7-83 (KPKTFKLRSL…LLTAGQTWQG (77 aa)).

In terms of assembly, heterodimer of DFFA and DFFB. Interacts with H1-1.

The protein localises to the cytoplasm. The protein resides in the nucleus. With respect to regulation, inhibited by DFFA (DFF45). Interacts with HIST1H1A. In terms of biological role, nuclease that induces DNA fragmentation and chromatin condensation during apoptosis. Degrades naked DNA and induces apoptotic morphology. This Bos taurus (Bovine) protein is DNA fragmentation factor subunit beta (DFFB).